The primary structure comprises 144 residues: Tryparedoxin (144 aa).

A Thioredoxin domain is found at 2-144; that stretch reads SGLAKYLPGA…PDGANFPWPN (143 aa). Cys-40 and Cys-43 are disulfide-bonded.

This sequence belongs to the thioredoxin family.

Its function is as follows. Acts as a thiol-disulfide oxidoreductase. It is spontaneously reduced by trypanothione. The sequence is that of Tryparedoxin from Trypanosoma brucei brucei.